A 90-amino-acid chain; its full sequence is Acylphosphatase (90 aa).

The Acylphosphatase-like domain occupies 3–90 (NYKIIVFGTV…KTYNDFSVTY (88 aa)). Active-site residues include Arg-18 and Asn-36.

Belongs to the acylphosphatase family.

The catalysed reaction is an acyl phosphate + H2O = a carboxylate + phosphate + H(+). The polypeptide is Acylphosphatase (acyP) (Ligilactobacillus salivarius (strain UCC118) (Lactobacillus salivarius)).